The chain runs to 297 residues: Ribosome production factor 2 homolog (297 aa).

The region spanning 28 to 232 (KKALFCRGAK…VMRKKLADDA (205 aa)) is the Brix domain.

It belongs to the RPF2 family.

It localises to the nucleus. The protein resides in the nucleolus. The protein is Ribosome production factor 2 homolog of Caenorhabditis elegans.